Reading from the N-terminus, the 252-residue chain is Triosephosphate isomerase (252 aa).

Residue 8–10 (NWK) coordinates substrate. His-95 serves as the catalytic Electrophile. Glu-167 serves as the catalytic Proton acceptor. Residues Gly-173, Ser-212, and 233–234 (GG) each bind substrate.

This sequence belongs to the triosephosphate isomerase family. In terms of assembly, homodimer.

Its subcellular location is the cytoplasm. It carries out the reaction D-glyceraldehyde 3-phosphate = dihydroxyacetone phosphate. Its pathway is carbohydrate biosynthesis; gluconeogenesis. The protein operates within carbohydrate degradation; glycolysis; D-glyceraldehyde 3-phosphate from glycerone phosphate: step 1/1. In terms of biological role, involved in the gluconeogenesis. Catalyzes stereospecifically the conversion of dihydroxyacetone phosphate (DHAP) to D-glyceraldehyde-3-phosphate (G3P). The protein is Triosephosphate isomerase of Lawsonia intracellularis (strain PHE/MN1-00).